Here is a 110-residue protein sequence, read N- to C-terminus: Small ribosomal subunit protein bS16 (110 aa).

Positions 82 to 103 (VKKREARNNPEKAVPRKERKAQ) are enriched in basic and acidic residues. The interval 82–110 (VKKREARNNPEKAVPRKERKAQAEAAAKG) is disordered.

This sequence belongs to the bacterial ribosomal protein bS16 family.

This is Small ribosomal subunit protein bS16 from Bradyrhizobium sp. (strain ORS 278).